The sequence spans 142 residues: Hemoglobin F-I (142 aa).

Positions 2–142 (GLTTAQIKAI…AAGVLVAAMK (141 aa)) constitute a Globin domain. A heme b-binding site is contributed by histidine 95.

Belongs to the globin family. In terms of assembly, homotetramer.

Hemoglobin F-I appears to function in storage, rather than transport of oxygen. The protein is Hemoglobin F-I of Urechis caupo (Innkeeper worm).